We begin with the raw amino-acid sequence, 200 residues long: Putative biotin transporter BioYB (200 aa).

6 consecutive transmembrane segments (helical) span residues Leu-13–Phe-33, Val-36–Gly-56, Ala-61–Phe-81, Gly-90–Leu-110, Phe-121–Tyr-141, and Trp-158–Ile-178.

Belongs to the BioY family.

It is found in the cell membrane. In terms of biological role, putative biotin transporter. The protein is Putative biotin transporter BioYB (bioYB) of Bacillus subtilis (strain 168).